The following is a 161-amino-acid chain: Decarboxylase (161 aa).

Positions 29-131 constitute an EthD domain; the sequence is QGMSEEAYRK…VGDHENFADT (103 aa).

Belongs to the tpcK family.

It carries out the reaction atrochrysone carboxylate + H(+) = atrochrysone + CO2. It participates in secondary metabolite biosynthesis. Its function is as follows. Decarboxylase; part of the gene cluster that mediates the biosynthesis of monodictyphenone, a prenyl xanthone derivative. The pathway begins with the synthesis of atrochrysone thioester by the polyketide synthase (PKS) mdpG. The atrochrysone carboxyl ACP thioesterase mdpF then breaks the thioester bond and releases the atrochrysone carboxylic acid from mdpG. The atrochrysone carboxylic acid is then converted to atrochrysone which is further transformed into emodin anthrone by mdpH-1 and mdpH-2. Emodin is further modified to yield monodictyphenone via several steps involving mdpB, mdpC mdpJ, mdpK and mdpL. These enzymes with xptA, xptB and xptC are also proposed to be involved in the synthesis of shamixanthone from emodin. Especially, direct reduction of emodin by the short chain dehydrogenase mdpC followed by dehydration catalyzed by the scytalone dehydratase-like protein mdpB gives loss of oxygen and formation of chrysophanol intermediate in two simple steps. This is Decarboxylase from Emericella nidulans (strain FGSC A4 / ATCC 38163 / CBS 112.46 / NRRL 194 / M139) (Aspergillus nidulans).